The following is a 353-amino-acid chain: Small ribosomal subunit biogenesis GTPase RsgA (353 aa).

The segment at 1 to 24 (MSKNKLSKGQQRRVKANHQRRLKT) is disordered. The span at 10–23 (QQRRVKANHQRRLK) shows a compositional bias: basic residues. The CP-type G domain maps to 104 to 274 (ASVLTRPDFY…VIDSPGVREF (171 aa)). GTP contacts are provided by residues 160–163 (NKID) and 214–222 (GQSGVGKSS). Cys-298, Cys-303, His-305, and Cys-311 together coordinate Zn(2+).

It belongs to the TRAFAC class YlqF/YawG GTPase family. RsgA subfamily. In terms of assembly, monomer. Associates with 30S ribosomal subunit, binds 16S rRNA. It depends on Zn(2+) as a cofactor.

The protein localises to the cytoplasm. In terms of biological role, one of several proteins that assist in the late maturation steps of the functional core of the 30S ribosomal subunit. Helps release RbfA from mature subunits. May play a role in the assembly of ribosomal proteins into the subunit. Circularly permuted GTPase that catalyzes slow GTP hydrolysis, GTPase activity is stimulated by the 30S ribosomal subunit. The chain is Small ribosomal subunit biogenesis GTPase RsgA from Klebsiella pneumoniae subsp. pneumoniae (strain ATCC 700721 / MGH 78578).